Here is an 863-residue protein sequence, read N- to C-terminus: Scm-like with four MBT domains protein 1 (863 aa).

MBT repeat units lie at residues 20–120, 128–232, 242–346, and 354–451; these read FSWE…LEAP, SDWN…LQPP, ADWQ…INPP, and FDWA…LSTP. Residues 638–773 form a disordered region; that stretch reads KKKNKRIGRP…SDDENKPPSP (136 aa). A compositionally biased stretch (basic residues) spans 660–679; that stretch reads KSSKRRKRRKNIFVHKKKRS. The segment covering 680–691 has biased composition (polar residues); the sequence is SASVDNTPVGSP. Acidic residues-rich tracts occupy residues 696-710 and 718-727; these read GEDEEDADDGDEDSL and QQEELQEESE. The span at 734-744 shows a compositional bias: low complexity; the sequence is SSSSPTQSETP. A phosphoserine mark is found at S764 and S772. The SAM domain maps to 793-861; that stretch reads WSVADVVRFI…RIKFAFYEQF (69 aa).

In terms of assembly, interacts with MYOD1. Component of the SLC (SFMBT1-LSD1-CoREST) corepressor complex, which also contains KDM1A/LSD1 and RCOR1/CoREST. Interacts with KDM1A/LSD1 and RCOR1/CoREST. Interacts with MYOD1. Interacts with L3MBTL3. In terms of tissue distribution, highly expressed in the testis, low expression is detected in brain, kidney, heart and lung. Highly expressed in germ cells, where it associates with the synaptic regions of meiotic chromosomes in pachytene stage spermatocytes.

The protein localises to the nucleus. Functionally, histone-binding protein, which is part of various corepressor complexes. Mediates the recruitment of corepressor complexes to target genes, followed by chromatin compaction and repression of transcription. Plays a role during myogenesis: required for the maintenance of undifferentiated states of myogenic progenitor cells via interaction with MYOD1. Interaction with MYOD1 leads to the recruitment of associated corepressors and silencing of MYOD1 target genes. Part of the SLC complex in germ cells, where it may play a role during spermatogenesis. This is Scm-like with four MBT domains protein 1 (Sfmbt1) from Mus musculus (Mouse).